Here is a 277-residue protein sequence, read N- to C-terminus: Mitochondrial outer membrane protein porin 5 (277 aa).

Belongs to the eukaryotic mitochondrial porin (TC 1.B.8.1) family.

Its subcellular location is the mitochondrion outer membrane. Forms a channel through the mitochondrial outer membrane that allows diffusion of small hydrophilic molecules. The channel adopts an open conformation at low or zero membrane potential and a closed conformation at potentials above 30-40 mV. The open state has a weak anion selectivity whereas the closed state is cation-selective. The sequence is that of Mitochondrial outer membrane protein porin 5 (VDAC5) from Oryza sativa subsp. japonica (Rice).